Reading from the N-terminus, the 537-residue chain is Tyrosine-protein kinase Fyn (537 aa).

Glycine 2 is lipidated: N-myristoyl glycine. S-palmitoyl cysteine attachment occurs at residues cysteine 3 and cysteine 6. Threonine 12 bears the Phosphothreonine; by PKC mark. A phosphoserine mark is found at serine 21 and serine 26. Residues 82–143 (TGVTLFVALY…PSNYVAPVDS (62 aa)) enclose the SH3 domain. The 98-residue stretch at 149-246 (WYFGKLGRKD…GLCCRLVVPC (98 aa)) folds into the SH2 domain. At tyrosine 185 the chain carries Phosphotyrosine. Residues 271–524 (LQLIKRLGNG…YLQGFLEDYF (254 aa)) form the Protein kinase domain. ATP contacts are provided by residues 277 to 285 (LGNGQFGEV) and lysine 299. Aspartate 390 serves as the catalytic Proton acceptor. At tyrosine 420 the chain carries Phosphotyrosine; by autocatalysis. At tyrosine 531 the chain carries Phosphotyrosine; by CSK.

The protein belongs to the protein kinase superfamily. Tyr protein kinase family. SRC subfamily. Interacts (via its SH3 domain) with PIK3R1 and PRMT8. Interacts with FYB1, PAG1, and SH2D1A. Interacts with CD79A (tyrosine-phosphorylated form); the interaction increases FYN activity. Interacts (via SH2 domain) with CSF1R (tyrosine phosphorylated). Interacts with TOM1L1 (phosphorylated form). Interacts with KDR (tyrosine phosphorylated). Interacts (via SH3 domain) with KLHL2 (via N-terminus). Interacts with SH2D1A and SLAMF1. Interacts with ITCH; the interaction phosphorylates ITCH and negatively regulates its activity. Interacts with FASLG. Interacts with RUNX3. Interacts with KIT. Interacts with EPHA8; possible downstream effector of EPHA8 in regulation of cell adhesion. Interacts with PTK2/FAK1; this interaction leads to PTK2/FAK1 phosphorylation and activation. Interacts with CAV1; this interaction couples integrins to the Ras-ERK pathway. Interacts with UNC119. Interacts (via SH2 domain) with PTPRH (phosphorylated form). Interacts with PTPRO (phosphorylated form). Interacts with PTPRB (phosphorylated form). Interacts with FYB2. Interacts with DSCAM. Interacts with SKAP1 and FYB1; this interaction promotes the phosphorylation of CLNK. Interacts with NEDD9; in the presence of PTK2. Mn(2+) is required as a cofactor. In terms of processing, autophosphorylated at Tyr-420. Phosphorylation on the C-terminal tail at Tyr-531 by CSK maintains the enzyme in an inactive state. PTPRC/CD45 dephosphorylates Tyr-531 leading to activation. Ultraviolet B (UVB) strongly increase phosphorylation at Thr-12 and kinase activity, and promotes translocation from the cytoplasm to the nucleus. Dephosphorylation at Tyr-420 by PTPN2 negatively regulates T-cell receptor signaling. Phosphorylated at tyrosine residues, which can be enhanced by NTN1. Palmitoylated. Palmitoylation at Cys-3 and Cys-6, probably by ZDHHC21, regulates subcellular location.

It localises to the cytoplasm. It is found in the nucleus. The protein resides in the cell membrane. Its subcellular location is the perikaryon. The catalysed reaction is L-tyrosyl-[protein] + ATP = O-phospho-L-tyrosyl-[protein] + ADP + H(+). With respect to regulation, inhibited by phosphorylation of Tyr-531 by leukocyte common antigen and activated by dephosphorylation of this site. Non-receptor tyrosine-protein kinase that plays a role in many biological processes including regulation of cell growth and survival, cell adhesion, integrin-mediated signaling, cytoskeletal remodeling, cell motility, immune response and axon guidance. Inactive FYN is phosphorylated on its C-terminal tail within the catalytic domain. Following activation by PKA, the protein subsequently associates with PTK2/FAK1, allowing PTK2/FAK1 phosphorylation, activation and targeting to focal adhesions. Involved in the regulation of cell adhesion and motility through phosphorylation of CTNNB1 (beta-catenin) and CTNND1 (delta-catenin). Regulates cytoskeletal remodeling by phosphorylating several proteins including the actin regulator WAS and the microtubule-associated proteins MAP2 and MAPT. Promotes cell survival by phosphorylating AGAP2/PIKE-A and preventing its apoptotic cleavage. Participates in signal transduction pathways that regulate the integrity of the glomerular slit diaphragm (an essential part of the glomerular filter of the kidney) by phosphorylating several slit diaphragm components including NPHS1, KIRREL1 and TRPC6. Plays a role in neural processes by phosphorylating DPYSL2, a multifunctional adapter protein within the central nervous system, ARHGAP32, a regulator for Rho family GTPases implicated in various neural functions, and SNCA, a small pre-synaptic protein. Involved in reelin signaling by mediating phosphorylation of DAB1 following reelin (RELN)-binding to its receptor. Participates in the downstream signaling pathways that lead to T-cell differentiation and proliferation following T-cell receptor (TCR) stimulation. Phosphorylates PTK2B/PYK2 in response to T-cell receptor activation. Also participates in negative feedback regulation of TCR signaling through phosphorylation of PAG1, thereby promoting interaction between PAG1 and CSK and recruitment of CSK to lipid rafts. CSK maintains LCK and FYN in an inactive form. Promotes CD28-induced phosphorylation of VAV1. In mast cells, phosphorylates CLNK after activation of immunoglobulin epsilon receptor signaling. Can also promote CD244-mediated NK cell activation. In Sus scrofa (Pig), this protein is Tyrosine-protein kinase Fyn.